The primary structure comprises 839 residues: MGPRAKTICSLFFLLWVLAEPAENSDFYLPGDYLLGGLFSLHANMKGIVHLNFLQVPMCKEYEVKVIGYNLMQAMRFAVEEINNDSSLLPGVLLGYEIVDVCYISNNVQPVLYFLAHEDNLLPIQEDYSNYISRVVAVIGPDNSESVMTVANFLSLFLLPQITYSAIGDELRDKVRFPALLRTTPSADHHVEAMVQLMLHFRWNWIIVLVSSDTYGRDNGQLLGERLARRDICIAFQETLPALQPNQNMTSEERQRLVTIVDKLQQSTARVVVVFSPDLSLYDFFNEVLRQNFTGAVWIASESWAIDPVLHNLTELRHLGTFLGITIQSVPIPGFSEFREWGPQAGPPPLSRTSQSYTCNQECDNCLNATLSFNTILRLSGERVVYSVYSAVYAVAHALHSLLGCDNSTCTKRVVYPWQLLEEIWKVNFTLLDHQIFFDPQGDVALHLEIVQWQWDRSQNPFQSVASYYPLQRQLKNIQDISWHTINNTIPVSMCSKRCQSGQKKKPVGIHVCCFECIDCLPGTFLNHTEDEYECQACPNNEWSYQSETSCFKRQLVFLEWHEAPTIAVALLAALGFLSTLAILVIFWRHFQTPIVRSAGGPMCFLMLTLLLVAYMVVPVYVGPPKVSTCLCRQALFPLCFTICISCIAVRSFQIVCAFKMASRFPRAYSYWVRYQGPYVSMAFITVLKMVIVVIGMLATGLSPTTRTDPDDPKITIVSCNPNYRNSLLFNTSLDLLLSVVGFSFAYMGKELPTNYNEAKFITLSMTFYFTSSVSLCTFMSAYSGVLVTIVDLLVTVLNLLAISLGYFGPKCYMILFYPERNTSAYFNSMIQGYTMRRD.

Residues 1 to 19 form the signal peptide; that stretch reads MGPRAKTICSLFFLLWVLA. Residues 20–566 lie on the Extracellular side of the membrane; that stretch reads EPAENSDFYL…VFLEWHEAPT (547 aa). N-linked (GlcNAc...) asparagine glycosylation is found at asparagine 84, asparagine 248, asparagine 292, asparagine 312, asparagine 368, asparagine 407, asparagine 428, asparagine 487, and asparagine 527. Residues 567-587 form a helical membrane-spanning segment; it reads IAVALLAALGFLSTLAILVIF. Residues 588–602 are Cytoplasmic-facing; sequence WRHFQTPIVRSAGGP. Residues 603-623 form a helical membrane-spanning segment; sequence MCFLMLTLLLVAYMVVPVYVG. Topologically, residues 624 to 635 are extracellular; sequence PPKVSTCLCRQA. The helical transmembrane segment at 636 to 656 threads the bilayer; sequence LFPLCFTICISCIAVRSFQIV. Over 657-681 the chain is Cytoplasmic; it reads CAFKMASRFPRAYSYWVRYQGPYVS. The chain crosses the membrane as a helical span at residues 682–702; that stretch reads MAFITVLKMVIVVIGMLATGL. At 703–727 the chain is on the extracellular side; sequence SPTTRTDPDDPKITIVSCNPNYRNS. The chain crosses the membrane as a helical span at residues 728 to 748; sequence LLFNTSLDLLLSVVGFSFAYM. Over 749–760 the chain is Cytoplasmic; it reads GKELPTNYNEAK. Residues 761–781 form a helical membrane-spanning segment; the sequence is FITLSMTFYFTSSVSLCTFMS. Over 782-784 the chain is Extracellular; sequence AYS. The chain crosses the membrane as a helical span at residues 785–805; the sequence is GVLVTIVDLLVTVLNLLAISL. The Cytoplasmic portion of the chain corresponds to 806–839; it reads GYFGPKCYMILFYPERNTSAYFNSMIQGYTMRRD.

It belongs to the G-protein coupled receptor 3 family. TAS1R subfamily. In terms of assembly, forms heterodimers with TAS1R3.

Its subcellular location is the cell membrane. Putative taste receptor. TAS1R2/TAS1R3 recognizes diverse natural and synthetic sweeteners. This Pan troglodytes (Chimpanzee) protein is Taste receptor type 1 member 2 (TAS1R2).